A 156-amino-acid chain; its full sequence is Small ribosomal subunit protein uS7 (156 aa).

This sequence belongs to the universal ribosomal protein uS7 family. In terms of assembly, part of the 30S ribosomal subunit. Contacts proteins S9 and S11.

Its function is as follows. One of the primary rRNA binding proteins, it binds directly to 16S rRNA where it nucleates assembly of the head domain of the 30S subunit. Is located at the subunit interface close to the decoding center, probably blocks exit of the E-site tRNA. This is Small ribosomal subunit protein uS7 from Metamycoplasma arthritidis (strain 158L3-1) (Mycoplasma arthritidis).